A 460-amino-acid chain; its full sequence is Argininosuccinate lyase (460 aa).

The protein belongs to the lyase 1 family. Argininosuccinate lyase subfamily.

It is found in the cytoplasm. The enzyme catalyses 2-(N(omega)-L-arginino)succinate = fumarate + L-arginine. Its pathway is amino-acid biosynthesis; L-arginine biosynthesis; L-arginine from L-ornithine and carbamoyl phosphate: step 3/3. The protein is Argininosuccinate lyase of Sulfurimonas denitrificans (strain ATCC 33889 / DSM 1251) (Thiomicrospira denitrificans (strain ATCC 33889 / DSM 1251)).